A 1222-amino-acid polypeptide reads, in one-letter code: Protein SCP160 (1222 aa).

Residues 1–12 (MSEEQTAIDSPP) are compositionally biased toward polar residues. Residues 1–59 (MSEEQTAIDSPPSTVEGSVETVTTIDSPSTTASTIAATAEEHPQLEKKPTPLPSLKDLP) form a disordered region. Positions 13 to 38 (STVEGSVETVTTIDSPSTTASTIAAT) are enriched in low complexity. The span at 39-49 (AEEHPQLEKKP) shows a compositional bias: basic and acidic residues. Residue T50 is modified to Phosphothreonine. A phosphoserine mark is found at S54, S63, S85, S87, and S89. A disordered region spans residues 79–98 (KPAVSNSPSPSPSAPSLTTG). A KH 1 domain is found at 177-249 (PINAVIEVPS…ESVNLAKAKI (73 aa)). Position 630 is a phosphoserine (S630). 5 consecutive KH domains span residues 634–702 (KSKM…KKYL), 712–771 (IITK…HEEL), 782–851 (GHKM…AKRV), 861–929 (FVTE…VEEI), and 939–1001 (SVTK…EKKI). Residue S1112 is modified to Phosphoserine. The region spanning 1153-1216 (YAGYVWGADT…AGVEKAGEMV (64 aa)) is the KH 7 domain.

It is found in the endoplasmic reticulum membrane. The protein localises to the nucleus membrane. In terms of biological role, involved in the control of mitotic chromosome transmission. Required during cell division for faithful partitioning of the ER-nuclear envelope membranes which, in S.cerevisiae, enclose the duplicated chromosomes. This Saccharomyces cerevisiae (strain ATCC 204508 / S288c) (Baker's yeast) protein is Protein SCP160 (SCP160).